We begin with the raw amino-acid sequence, 230 residues long: U2 small nuclear ribonucleoprotein A' (230 aa).

LRR repeat units lie at residues 15-36, 48-69, 71-92, 93-114, and 115-136; these read SLRN…NADT, GDRE…GVTE, HYTS…PRLE, TLRT…KNIA, and KLET…ESLK. Positions 149–187 constitute an LRRCT domain; sequence NPVQHVPRYRSYMISILPSLRMLDFQRVTQKERDEAEAM.

It belongs to the U2 small nuclear ribonucleoprotein A family. As to quaternary structure, associated with the spliceosome.

It localises to the nucleus. Functionally, involved in pre-mRNA splicing. This chain is U2 small nuclear ribonucleoprotein A' (LEA1), found in Yarrowia lipolytica (strain CLIB 122 / E 150) (Yeast).